Consider the following 203-residue polypeptide: Endo-type membrane-bound lytic murein transglycosylase A (203 aa).

A signal peptide spans 1 to 15 (MKLRWFAFLMVLLAG). Cysteine 16 carries N-palmitoyl cysteine lipidation. A lipid anchor (S-diacylglycerol cysteine) is attached at cysteine 16.

Belongs to the transglycosylase Slt family.

Its subcellular location is the cell outer membrane. It catalyses the reaction Endolytic cleavage of the (1-&gt;4)-beta-glycosidic linkage between N-acetylmuramic acid (MurNAc) and N-acetylglucosamine (GlcNAc) residues in peptidoglycan with concomitant formation of a 1,6-anhydrobond in the MurNAc residue.. In terms of biological role, murein-degrading enzyme. May play a role in recycling of muropeptides during cell elongation and/or cell division. Preferentially cleaves at a distance of more than two disaccharide units from the ends of the glycan chain. The sequence is that of Endo-type membrane-bound lytic murein transglycosylase A from Enterobacter sp. (strain 638).